The following is a 22-amino-acid chain: Caerin-3.2 (22 aa).

Residue lysine 22 is modified to Lysine amide.

Expressed by the skin parotoid and/or rostral glands.

It is found in the secreted. Functionally, antibacterial peptide, that adopts an alpha helical conformation which can disrupt bacterial membranes. Each caerin displays a different antimicrobial specificity. The protein is Caerin-3.2 of Ranoidea caerulea (Green tree frog).